Here is a 275-residue protein sequence, read N- to C-terminus: MPELPEVETVCRRLRPAVSGKTIQSVDVLDPKIIRGLDPEEWVHHLIGETITDVERRGKFILFKLTNGYLVSHLRMEGKFFPYETATEPVKHTHVVITFTDQSTLHYNDVRKFGTMELRTNETIHTTPPLSLLAYEPFDERVTTEALHRRLERMKTRAIKTALLDQSIFVGLGNIYVDETLFRAGVHPTRPAASLSREEVDRVRTEAVAVLNEAIERGGSTIRSYADPDGATGTFQERLYVYGQTGEPCRRCGHEIEKMKLGGRGTHYCPHCQQR.

P2 serves as the catalytic Schiff-base intermediate with DNA. The active-site Proton donor is E3. The active-site Proton donor; for beta-elimination activity is the K59. DNA is bound by residues H92, R111, and K155. The FPG-type zinc-finger motif lies at 240–274 (YVYGQTGEPCRRCGHEIEKMKLGGRGTHYCPHCQQ). Residue R264 is the Proton donor; for delta-elimination activity of the active site.

Belongs to the FPG family. Monomer. It depends on Zn(2+) as a cofactor.

It carries out the reaction Hydrolysis of DNA containing ring-opened 7-methylguanine residues, releasing 2,6-diamino-4-hydroxy-5-(N-methyl)formamidopyrimidine.. The enzyme catalyses 2'-deoxyribonucleotide-(2'-deoxyribose 5'-phosphate)-2'-deoxyribonucleotide-DNA = a 3'-end 2'-deoxyribonucleotide-(2,3-dehydro-2,3-deoxyribose 5'-phosphate)-DNA + a 5'-end 5'-phospho-2'-deoxyribonucleoside-DNA + H(+). In terms of biological role, involved in base excision repair of DNA damaged by oxidation or by mutagenic agents. Acts as a DNA glycosylase that recognizes and removes damaged bases. Has a preference for oxidized purines, such as 7,8-dihydro-8-oxoguanine (8-oxoG). Has AP (apurinic/apyrimidinic) lyase activity and introduces nicks in the DNA strand. Cleaves the DNA backbone by beta-delta elimination to generate a single-strand break at the site of the removed base with both 3'- and 5'-phosphates. The polypeptide is Formamidopyrimidine-DNA glycosylase (Exiguobacterium sp. (strain ATCC BAA-1283 / AT1b)).